Here is a 299-residue protein sequence, read N- to C-terminus: Bifunctional protein FolD 2 (299 aa).

NADP(+) contacts are provided by residues 168–170, S193, and I234; that span reads GRS.

It belongs to the tetrahydrofolate dehydrogenase/cyclohydrolase family. Homodimer.

The catalysed reaction is (6R)-5,10-methylene-5,6,7,8-tetrahydrofolate + NADP(+) = (6R)-5,10-methenyltetrahydrofolate + NADPH. The enzyme catalyses (6R)-5,10-methenyltetrahydrofolate + H2O = (6R)-10-formyltetrahydrofolate + H(+). It participates in one-carbon metabolism; tetrahydrofolate interconversion. In terms of biological role, catalyzes the oxidation of 5,10-methylenetetrahydrofolate to 5,10-methenyltetrahydrofolate and then the hydrolysis of 5,10-methenyltetrahydrofolate to 10-formyltetrahydrofolate. The chain is Bifunctional protein FolD 2 from Rhizobium etli (strain ATCC 51251 / DSM 11541 / JCM 21823 / NBRC 15573 / CFN 42).